The following is a 326-amino-acid chain: Probable cell division protein WhiA (326 aa).

The H-T-H motif DNA-binding region spans 275–308 (SLEELGQLSDPPLTKDAVAGRIRRLLAMADKKAS).

Belongs to the WhiA family.

Involved in cell division and chromosome segregation. In Beutenbergia cavernae (strain ATCC BAA-8 / DSM 12333 / CCUG 43141 / JCM 11478 / NBRC 16432 / NCIMB 13614 / HKI 0122), this protein is Probable cell division protein WhiA.